The chain runs to 149 residues: Large ribosomal subunit protein uL15 (149 aa).

Positions 14 to 63 (ASRKRVGRGSGSGLGCTSGKGNKGQNARAGGGVRPGFEGGQMPLQRRLPK) are disordered. Gly residues-rich tracts occupy residues 21-35 (RGSG…GKGN) and 42-52 (AGGGVRPGFEG).

It belongs to the universal ribosomal protein uL15 family. Part of the 50S ribosomal subunit.

In terms of biological role, binds to the 23S rRNA. The polypeptide is Large ribosomal subunit protein uL15 (Nitratidesulfovibrio vulgaris (strain DSM 19637 / Miyazaki F) (Desulfovibrio vulgaris)).